The primary structure comprises 733 residues: FYVE, RhoGEF and PH domain-containing protein 3 (733 aa).

Polar residues-rich tracts occupy residues 1–11 (MELGRSSSTPQ), 47–60 (HSSS…STRE), and 106–117 (ETASDSRVPQDN). The segment at 1–134 (MELGRSSSTP…GVGEEPDPKV (134 aa)) is disordered. Residues 118 to 129 (PQEEEDSGVGEE) show a composition bias toward acidic residues. Serine 124 carries the phosphoserine modification. The DH domain occupies 153–337 (KLLHIAQELL…STAADHSNAA (185 aa)). The 100-residue stretch at 366–465 (ELIKEGSIQK…WIQVIQATVE (100 aa)) folds into the PH 1 domain. Residues 481-535 (CSQDEEPTLSPDQPVMSTSSVEPAGVADSNGGTPGIESRKSSSKTRRDKEKPGCK) form a disordered region. A compositionally biased stretch (basic and acidic residues) spans 517-533 (ESRKSSSKTRRDKEKPG). The segment at 528–584 (DKEKPGCKSCGETFNSITKRRYRCKLCGEVICRKCSEFKAENSKQSRVCRECFLEEP) adopts an FYVE-type zinc-finger fold. Zn(2+) contacts are provided by cysteine 534, cysteine 537, cysteine 551, cysteine 554, cysteine 559, cysteine 562, cysteine 576, and cysteine 579. Disordered regions lie at residues 586–612 (VPPS…DPRP) and 712–733 (GDTA…TDTP). In terms of domain architecture, PH 2 spans 612–711 (PSLLCGTLNL…WLKALGTAVH (100 aa)). Threonine 732 carries the phosphothreonine modification.

In terms of tissue distribution, detected in adult brain, spleen, lung and skeletal muscle. Detected in embryos from 7 dpc to 17 dpc.

The protein localises to the cytoplasm. It is found in the cytoskeleton. Functionally, promotes the formation of filopodia. May activate CDC42, a member of the Ras-like family of Rho- and Rac proteins, by exchanging bound GDP for free GTP. Plays a role in regulating the actin cytoskeleton and cell shape. This chain is FYVE, RhoGEF and PH domain-containing protein 3 (Fgd3), found in Mus musculus (Mouse).